The chain runs to 941 residues: Protocadherin alpha-12 (941 aa).

Positions M1–G29 are cleaved as a signal peptide. Cadherin domains are found at residues Q30 to F133, R134 to F242, D243 to V350, M351 to F455, A456 to L565, and V581 to T678. At Q30–N697 the chain is on the extracellular side. N-linked (GlcNAc...) asparagine glycosylation is found at N257 and N265. N548 is a glycosylation site (N-linked (GlcNAc...) asparagine). A helical transmembrane segment spans residues V698–Y718. At T719 to Q941 the chain is on the cytoplasmic side. 5 PXXP repeats span residues P734–P737, P790–P793, P823–P826, G863–N866, and P882–P885. A 5 X 4 AA repeats of P-X-X-P region spans residues P734 to P885. A disordered region spans residues I818–Q941. The segment covering D900–K914 has biased composition (basic and acidic residues).

Its subcellular location is the cell membrane. In terms of biological role, potential calcium-dependent cell-adhesion protein. May be involved in the establishment and maintenance of specific neuronal connections in the brain. This is Protocadherin alpha-12 (PCDHA12) from Homo sapiens (Human).